A 159-amino-acid polypeptide reads, in one-letter code: NADH-quinone oxidoreductase subunit I (159 aa).

4Fe-4S ferredoxin-type domains are found at residues Arg-51 to Asp-80 and Thr-90 to Asn-119. [4Fe-4S] cluster is bound by residues Cys-60, Cys-63, Cys-66, Cys-70, Cys-99, Cys-102, Cys-105, and Cys-109.

It belongs to the complex I 23 kDa subunit family. NDH-1 is composed of 14 different subunits. Subunits NuoA, H, J, K, L, M, N constitute the membrane sector of the complex. [4Fe-4S] cluster is required as a cofactor.

It is found in the cell inner membrane. It catalyses the reaction a quinone + NADH + 5 H(+)(in) = a quinol + NAD(+) + 4 H(+)(out). Its function is as follows. NDH-1 shuttles electrons from NADH, via FMN and iron-sulfur (Fe-S) centers, to quinones in the respiratory chain. The immediate electron acceptor for the enzyme in this species is believed to be ubiquinone. Couples the redox reaction to proton translocation (for every two electrons transferred, four hydrogen ions are translocated across the cytoplasmic membrane), and thus conserves the redox energy in a proton gradient. This is NADH-quinone oxidoreductase subunit I from Rickettsia typhi (strain ATCC VR-144 / Wilmington).